Consider the following 62-residue polypeptide: Small EDRK-rich factor 1 (62 aa).

2 stretches are compositionally biased toward basic and acidic residues: residues 1–30 (MARGNQRELARQKNMKKSQEISKGKRKEDS) and 50–62 (AANERKSMQTREK). A disordered region spans residues 1–62 (MARGNQRELA…ERKSMQTREK (62 aa)).

Belongs to the SERF family. Interacts with SNCA; this interaction promotes the aggregation of SNCA.

It is found in the cytoplasm. The protein resides in the cytosol. It localises to the nucleus. Positive regulator of amyloid protein aggregation and proteotoxicity. Induces conformational changes in amyloid proteins, such as APP, HTT, and SNCA, driving them into compact formations preceding the formation of aggregates. The protein is Small EDRK-rich factor 1 (SERF1) of Bos taurus (Bovine).